Consider the following 85-residue polypeptide: Putative membrane protein insertion efficiency factor (85 aa).

A disordered region spans residues 66–85 (PLNSGGDDPVPPKLDDNREH).

The protein belongs to the UPF0161 family.

It is found in the cell inner membrane. In terms of biological role, could be involved in insertion of integral membrane proteins into the membrane. This is Putative membrane protein insertion efficiency factor from Yersinia pestis bv. Antiqua (strain Antiqua).